Here is a 660-residue protein sequence, read N- to C-terminus: Bifunctional polymyxin resistance protein ArnA (660 aa).

Residues 1 to 304 (MKAVIFAYHD…TLGLVAGARL (304 aa)) form a formyltransferase ArnAFT region. Catalysis depends on H104, which acts as the Proton donor; for formyltransferase activity. (6R)-10-formyltetrahydrofolate is bound by residues R114 and 136 to 140 (VKRAD). Residues 314 to 660 (RRIRVLILGV…RSVDVAERAS (347 aa)) are dehydrogenase ArnADH. NAD(+)-binding positions include D347 and 368–369 (DI). UDP-alpha-D-glucuronate-binding positions include A393, Y398, and 432–433 (TS). E434 functions as the Proton acceptor; for decarboxylase activity in the catalytic mechanism. UDP-alpha-D-glucuronate contacts are provided by residues R460, N492, 526–535 (KLIDGGQQKR), and Y613. R619 acts as the Proton donor; for decarboxylase activity in catalysis.

In the N-terminal section; belongs to the Fmt family. UDP-L-Ara4N formyltransferase subfamily. It in the C-terminal section; belongs to the NAD(P)-dependent epimerase/dehydratase family. UDP-glucuronic acid decarboxylase subfamily. Homohexamer, formed by a dimer of trimers.

The enzyme catalyses UDP-alpha-D-glucuronate + NAD(+) = UDP-beta-L-threo-pentopyranos-4-ulose + CO2 + NADH. It catalyses the reaction UDP-4-amino-4-deoxy-beta-L-arabinose + (6R)-10-formyltetrahydrofolate = UDP-4-deoxy-4-formamido-beta-L-arabinose + (6S)-5,6,7,8-tetrahydrofolate + H(+). Its pathway is nucleotide-sugar biosynthesis; UDP-4-deoxy-4-formamido-beta-L-arabinose biosynthesis; UDP-4-deoxy-4-formamido-beta-L-arabinose from UDP-alpha-D-glucuronate: step 1/3. The protein operates within nucleotide-sugar biosynthesis; UDP-4-deoxy-4-formamido-beta-L-arabinose biosynthesis; UDP-4-deoxy-4-formamido-beta-L-arabinose from UDP-alpha-D-glucuronate: step 3/3. It participates in bacterial outer membrane biogenesis; lipopolysaccharide biosynthesis. Its function is as follows. Bifunctional enzyme that catalyzes the oxidative decarboxylation of UDP-glucuronic acid (UDP-GlcUA) to UDP-4-keto-arabinose (UDP-Ara4O) and the addition of a formyl group to UDP-4-amino-4-deoxy-L-arabinose (UDP-L-Ara4N) to form UDP-L-4-formamido-arabinose (UDP-L-Ara4FN). The modified arabinose is attached to lipid A and is required for resistance to polymyxin and cationic antimicrobial peptides. This Salmonella dublin (strain CT_02021853) protein is Bifunctional polymyxin resistance protein ArnA.